A 326-amino-acid polypeptide reads, in one-letter code: Homoserine kinase (326 aa).

Belongs to the pseudomonas-type ThrB family.

The enzyme catalyses L-homoserine + ATP = O-phospho-L-homoserine + ADP + H(+). Its pathway is amino-acid biosynthesis; L-threonine biosynthesis; L-threonine from L-aspartate: step 4/5. This is Homoserine kinase from Nitrobacter hamburgensis (strain DSM 10229 / NCIMB 13809 / X14).